The chain runs to 78 residues: UPF0291 protein ABC2165 (78 aa).

Positions 56 to 78 (AKGNDVTPQKLKDSKAQKHKRLH) are disordered.

This sequence belongs to the UPF0291 family.

It localises to the cytoplasm. This is UPF0291 protein ABC2165 from Shouchella clausii (strain KSM-K16) (Alkalihalobacillus clausii).